Consider the following 473-residue polypeptide: FAD-dependent monooxygenase ctvC (473 aa).

The FAD site is built by glutamate 37, alanine 51, and arginine 110. The helical transmembrane segment at 218–238 threads the bilayer; it reads IGPGFTFLIFPAAGDSLFWVL. FAD is bound by residues aspartate 310 and alanine 323. Asparagine 358 carries an N-linked (GlcNAc...) asparagine glycan. The chain crosses the membrane as a helical span at residues 451–471; that stretch reads LVYCFGVVILLWISWAVFNVN.

The protein belongs to the paxM FAD-dependent monooxygenase family. FAD is required as a cofactor.

The protein localises to the membrane. It functions in the pathway mycotoxin biosynthesis. FAD-dependent monooxygenase; part of the gene cluster that mediates the biosynthesis of citreoviridin, an inhibitor of the of F1-ATPase beta-subunit. The HR-PKS ctvA accepts acetyl-CoA as the starter unit and catalyzes eight iterations of malonyl-CoA extension and four iterations of SAM-dependent methylation at C4, C12, C14, and C16. The KR and DH domains selectively act on the first six iterations to generate the hexaene chain. In the last three iterations, the KR and DH domains terminate their functions to yield a beta,delta-diketo ester moiety, which then undergoes intramolecular cyclization to yield an alpha-pyrone intermediate. Subsequently, ctvB methylates the alpha-pyrone hydroxyl group to generate citreomontanin. In order to form the tetrahydrofuran ring with the correct stereochemistry, the terminal alkenes of citreomontanin need to undergo isomerization to yield a (17Z)-hexaene, a step that could be catalyzed by ctvC. The (17Z)-hexaene then undergoes bisepoxidation by ctvC to form a (17R,16R,15S,14R)-bisepoxide moiety. Lastly, ctvD acts as a regioselective hydrolase to form the tetrahydrofuran ring with the substituents in the correct absolute configuration, completing the biosynthesis of citreoviridin. The chain is FAD-dependent monooxygenase ctvC from Aspergillus terreus (strain NIH 2624 / FGSC A1156).